A 932-amino-acid polypeptide reads, in one-letter code: DNA mismatch repair protein MutS (932 aa).

615–622 (GPNMAGKS) is an ATP binding site.

The protein belongs to the DNA mismatch repair MutS family.

This protein is involved in the repair of mismatches in DNA. It is possible that it carries out the mismatch recognition step. This protein has a weak ATPase activity. The protein is DNA mismatch repair protein MutS of Clostridium botulinum (strain Langeland / NCTC 10281 / Type F).